The chain runs to 283 residues: 4-diphosphocytidyl-2-C-methyl-D-erythritol kinase (283 aa).

K12 is a catalytic residue. Residue P94–S104 coordinates ATP. D136 is an active-site residue.

The protein belongs to the GHMP kinase family. IspE subfamily.

The catalysed reaction is 4-CDP-2-C-methyl-D-erythritol + ATP = 4-CDP-2-C-methyl-D-erythritol 2-phosphate + ADP + H(+). It participates in isoprenoid biosynthesis; isopentenyl diphosphate biosynthesis via DXP pathway; isopentenyl diphosphate from 1-deoxy-D-xylulose 5-phosphate: step 3/6. Its function is as follows. Catalyzes the phosphorylation of the position 2 hydroxy group of 4-diphosphocytidyl-2C-methyl-D-erythritol. The chain is 4-diphosphocytidyl-2-C-methyl-D-erythritol kinase from Acidovorax sp. (strain JS42).